The sequence spans 67 residues: DNA gyrase inhibitor YacG (67 aa).

Zn(2+) contacts are provided by cysteine 8, cysteine 11, cysteine 27, and cysteine 31.

It belongs to the DNA gyrase inhibitor YacG family. As to quaternary structure, interacts with GyrB. It depends on Zn(2+) as a cofactor.

In terms of biological role, inhibits all the catalytic activities of DNA gyrase by preventing its interaction with DNA. Acts by binding directly to the C-terminal domain of GyrB, which probably disrupts DNA binding by the gyrase. In Ralstonia pickettii (strain 12J), this protein is DNA gyrase inhibitor YacG.